The chain runs to 232 residues: Small ribosomal subunit protein uS2 (232 aa).

It belongs to the universal ribosomal protein uS2 family.

The sequence is that of Small ribosomal subunit protein uS2 from Carboxydothermus hydrogenoformans (strain ATCC BAA-161 / DSM 6008 / Z-2901).